The chain runs to 331 residues: Protoheme IX farnesyltransferase (331 aa).

A run of 9 helical transmembrane segments spans residues 22 to 42 (LVKPKIIALLLMTTAGAMWMA), 50 to 70 (FGVTLLGGGMAAAAANVINMV), 100 to 120 (FAGILAVMSFGLLACFTNLLA), 147 to 167 (IVIGGAAGAIPPLVGWAAATG), 174 to 194 (WVMFALIFLWTPPHFWALAIL), 220 to 240 (ILLYALLLVPVSLLLVYPLHV), 241 to 261 (LGSFYLSAATLLGSLLIWKAV), 273 to 293 (ATSLFTFANLYLLLLCGAMGL), and 307 to 327 (LASLQGVYASLGALANHLGAM).

The protein belongs to the UbiA prenyltransferase family. Protoheme IX farnesyltransferase subfamily.

The protein localises to the cell inner membrane. The enzyme catalyses heme b + (2E,6E)-farnesyl diphosphate + H2O = Fe(II)-heme o + diphosphate. The protein operates within porphyrin-containing compound metabolism; heme O biosynthesis; heme O from protoheme: step 1/1. Functionally, converts heme B (protoheme IX) to heme O by substitution of the vinyl group on carbon 2 of heme B porphyrin ring with a hydroxyethyl farnesyl side group. The polypeptide is Protoheme IX farnesyltransferase (Synechococcus sp. (strain JA-3-3Ab) (Cyanobacteria bacterium Yellowstone A-Prime)).